A 372-amino-acid polypeptide reads, in one-letter code: NAD(P)H-quinone oxidoreductase subunit 1 (372 aa).

Helical transmembrane passes span 27–47, 97–117, 128–148, 166–186, 204–224, 266–286, 308–328, and 347–367; these read LLWI…GVLV, VLFT…WLIV, VGIG…GLLM, AAQS…IVMM, FLSW…ICAL, VLSA…PISI, SLGI…AILL, and FLLP…LAFP.

The protein belongs to the complex I subunit 1 family. As to quaternary structure, NDH-1 is composed of at least 11 different subunits.

It localises to the cellular thylakoid membrane. It carries out the reaction a plastoquinone + NADH + (n+1) H(+)(in) = a plastoquinol + NAD(+) + n H(+)(out). The catalysed reaction is a plastoquinone + NADPH + (n+1) H(+)(in) = a plastoquinol + NADP(+) + n H(+)(out). Functionally, NDH-1 shuttles electrons from an unknown electron donor, via FMN and iron-sulfur (Fe-S) centers, to quinones in the respiratory and/or the photosynthetic chain. The immediate electron acceptor for the enzyme in this species is believed to be plastoquinone. Couples the redox reaction to proton translocation, and thus conserves the redox energy in a proton gradient. In Prochlorococcus marinus (strain NATL2A), this protein is NAD(P)H-quinone oxidoreductase subunit 1.